The sequence spans 405 residues: Amino sugar nitrososynthase DnmZ (405 aa).

Glu117 and Arg332 together coordinate dTDP.

It belongs to the acyl-CoA dehydrogenase family. In terms of assembly, homotetramer. The cofactor is FAD.

It functions in the pathway antibiotic biosynthesis. Nitrososynthase involved in the biosynthesis of baumycin. Catalyzes the double-oxidation of TDP-L-epi-vancosamine to TDP-L-epi-vancosonitrose. The rapid turnover of TDP-L-epi-vancosamine suggests that this compound, or a closely related analog, is the natural substrate for DnmZ. Can also catalyze the double-oxidation of TDP-L-evernosamine to TDP-L-evernitrosose. The sequence is that of Amino sugar nitrososynthase DnmZ from Streptomyces peucetius.